A 2496-amino-acid polypeptide reads, in one-letter code: Hornerin (2496 aa).

The tract at residues 1–81 (MPKLLESIVT…TEYLLMILKL (81 aa)) is S-100-like. EF-hand domains are found at residues 13–48 (DVFY…LKNP) and 49–84 (DDPD…LTKA). Ca(2+)-binding residues include methionine 27, glutamate 32, aspartate 62, aspartate 64, asparagine 66, lysine 68, and glutamate 73. Positions 82 to 98 (TKACNKIIGKDYCQASG) are s (spacer). Residues 97 to 2496 (SGSKQKNHSH…SGQTSGCGSG (2400 aa)) form a disordered region. One copy of the 1; truncated repeat lies at 99–145 (SKQKNHSHQHQEEQSKKETENKEQKGSISSSAGENDSYSRGSRGSNK). A compositionally biased stretch (basic and acidic residues) spans 107 to 123 (QHQEEQSKKETENKEQK). Residues 124-134 (GSISSSAGEND) show a composition bias toward polar residues. The span at 144 to 153 (NKSKSKKLRK) shows a compositional bias: basic residues. 27 repeat units span residues 146-231 (SKSK…NGKH), 232-321 (GSSS…FGSS), 326-400 (SGQS…SEQY), 401-491 (GASS…SCCG), 492-577 (QSSG…SGRY), 578-668 (GASS…SGSR), 669-748 (HGSG…SGRC), 749-839 (GASS…SCCG), 840-926 (QSSG…SGRY), 927-1017 (GASS…SGSR), 1018-1097 (HGSG…SGRC), 1098-1188 (GASS…SCCG), 1189-1274 (QSSG…SGRY), 1275-1365 (GASS…SGSR), 1366-1445 (HGSG…SGRC), 1446-1536 (GASS…SCCG), 1537-1622 (QSSG…SGRY), 1623-1713 (GASS…SGSR), 1714-1793 (HGSG…SGRC), 1794-1884 (GASS…SCCG), 1885-1970 (QSSG…SGRY), 1971-2061 (GASS…SGSR), 2062-2141 (HGSG…SGRC), 2142-2232 (GASS…SGSR), 2233-2312 (HGSG…SGRY), 2313-2403 (GASS…SGSR), and 2410-2496 (QFPI…CGSG). 3 stretches are compositionally biased toward low complexity: residues 183–194 (SGFSNSSGNGRP), 200–246 (SGFP…SGHS), and 270–286 (RESS…SEEP). 2 stretches are compositionally biased toward polar residues: residues 294-319 (RKNS…QGFG) and 326-355 (SGQS…SSES). Low complexity-rich tracts occupy residues 362–379 (VSGS…STSG), 394–415 (SSGS…SGQS), and 423–448 (SGSR…QQFG). The span at 449–464 (SGSGRSSGFSQGGSGQ) shows a compositional bias: gly residues. A compositionally biased stretch (low complexity) spans 465 to 565 (GRSSRGGQQG…GQTSSSTRQG (101 aa)). Phosphoserine is present on residues serine 506 and serine 508. Gly residues predominate over residues 566–576 (SGQGQASGSGR). Composition is skewed to low complexity over residues 577–593 (YGAS…GQST) and 600–625 (SGSR…QRYG). Positions 626–641 (SGSGESSGFSQGGSGQ) are enriched in gly residues. Composition is skewed to low complexity over residues 642-670 (GRSS…SRHG) and 679-713 (SGQQ…GSGS). At arginine 646 the chain carries Omega-N-methylarginine. Serine 716 is modified (phosphoserine). Residues 723 to 736 (GSTSGQTASSTRQG) are compositionally biased toward low complexity. Positions 737–747 (SGQGQASGSGR) are enriched in gly residues. 4 stretches are compositionally biased toward low complexity: residues 748-764 (CGAS…GQST), 771-796 (SGSR…QRFG), 804-884 (GFSQ…SRPA), and 891-914 (SGRS…TRQG). Serine 815 carries the post-translational modification Phosphoserine. Gly residues predominate over residues 915 to 925 (SGQGQASGSGR). Composition is skewed to low complexity over residues 926–942 (YGAS…GQST) and 949–974 (SGSR…QRYG). Residues 975-990 (SGSGESSGFSQGGSGQ) are compositionally biased toward gly residues. Low complexity-rich tracts occupy residues 991–1019 (GRSS…SRHG), 1028–1062 (SGQQ…GSGS), and 1072–1085 (GSTS…TRQG). The residue at position 995 (arginine 995) is an Omega-N-methylarginine. Gly residues predominate over residues 1086–1096 (SGQGQASGSGR). Low complexity-rich tracts occupy residues 1097-1113 (CGAS…GQST), 1120-1145 (SGSR…QRFG), and 1153-1262 (GFSQ…TRQG). Serine 1229 carries the post-translational modification Phosphoserine. Over residues 1263–1273 (SGQGQASGSGR) the composition is skewed to gly residues. The span at 1281–1292 (TSGCRSGQSTRY) shows a compositional bias: polar residues. Low complexity predominate over residues 1298-1322 (GSRNSSTQSRGRSTSRESSTSQRYG). Positions 1323-1338 (SGSGESSGFSQGGSGQ) are enriched in gly residues. 3 stretches are compositionally biased toward low complexity: residues 1339-1367 (GRSS…SRHG), 1376-1410 (SGQQ…GSGS), and 1420-1433 (GSTS…TRQG). Residue arginine 1343 is modified to Omega-N-methylarginine. The span at 1434-1444 (SGQGQASGSGR) shows a compositional bias: gly residues. 3 stretches are compositionally biased toward low complexity: residues 1445–1461 (CGAS…GQST), 1468–1493 (SGSR…QRFG), and 1501–1610 (GFSQ…TRQG). Serine 1551 and serine 1553 each carry phosphoserine. The segment covering 1611–1621 (SGQGQASGSGR) has biased composition (gly residues). Composition is skewed to low complexity over residues 1622–1631 (YGASSGQTSG) and 1645–1670 (SGSR…QRCG). Position 1650 is a phosphoserine (serine 1650). Over residues 1671–1686 (SGSGESSGFSQGGSGQ) the composition is skewed to gly residues. 3 stretches are compositionally biased toward low complexity: residues 1687–1715 (GRSS…SRHG), 1724–1758 (SGQQ…GSGS), and 1768–1781 (GSTS…TRQG). Arginine 1691 carries the post-translational modification Omega-N-methylarginine. Gly residues predominate over residues 1782 to 1792 (SGQGQASGSGR). A compositionally biased stretch (polar residues) spans 1800–1811 (TSGCGSDQSTRY). Low complexity-rich tracts occupy residues 1816-1841 (SGSR…QRFG) and 1849-1958 (GFSQ…TRQG). Residues 1959 to 1969 (SGQGQASGSGR) show a composition bias toward gly residues. Composition is skewed to low complexity over residues 1970-1986 (YGAS…GQST) and 1993-2018 (SGSR…QRYG). Phosphoserine is present on serine 2011. Residues 2019-2034 (SGSGESSGFSQGGSGQ) are compositionally biased toward gly residues. Composition is skewed to low complexity over residues 2035–2063 (GRSS…SRHG) and 2072–2106 (SGQQ…GSGS). Arginine 2039 bears the Omega-N-methylarginine mark. A phosphoserine mark is found at serine 2109 and serine 2124. Low complexity predominate over residues 2116-2129 (GSTSGQTASSTRQG). A compositionally biased stretch (gly residues) spans 2130–2140 (SGQGQASGSGR). Low complexity-rich tracts occupy residues 2141–2157 (CGAS…GQST) and 2164–2189 (SGSR…QRYG). Gly residues predominate over residues 2190 to 2205 (SGSGESSGFSQGGSGQ). Composition is skewed to low complexity over residues 2206–2234 (GRSS…SRHG) and 2243–2300 (SGQQ…TRQG). Omega-N-methylarginine is present on arginine 2210. The span at 2301–2311 (SGQGQASGSGR) shows a compositional bias: gly residues. Composition is skewed to low complexity over residues 2312–2328 (YGAS…GQST) and 2335–2360 (SGSR…QRYG). Serine 2353 is subject to Phosphoserine. Residues 2361–2376 (SGSGESSGFSQGGSGQ) show a composition bias toward gly residues. 3 stretches are compositionally biased toward low complexity: residues 2377 to 2405 (GRSS…SRHG), 2414 to 2448 (SGQQ…GSGS), and 2458 to 2471 (GSTS…TRQG). Residue arginine 2381 is modified to Omega-N-methylarginine. Gly residues predominate over residues 2472–2482 (SGQGQASGSGR).

It belongs to the S100-fused protein family. In the N-terminal section; belongs to the S-100 family. Post-translationally, processed during the process of epidermal differentiation. Forms covalent cross-links mediated by transglutaminase TGM3, between glutamine and the epsilon-amino group of lysine residues (in vitro). Embryonic skin. Highest level in the adult forestomach followed by the skin. Lower levels in the tongue, esophagus. Detected in the granular and cornified layers of the mature epidermis.

The protein resides in the cytoplasmic granule. In terms of biological role, component of the epidermal cornified cell envelopes. The protein is Hornerin (Hrnr) of Mus musculus (Mouse).